The chain runs to 508 residues: Dihydroniloticin synthase CYP71CD4 (508 aa).

A helical membrane pass occupies residues 6 to 26 (LDFFSVTSFIIFFLFLFRLVW). Cys449 serves as a coordination point for heme.

This sequence belongs to the cytochrome P450 family. Requires heme as cofactor. In terms of tissue distribution, mainly expressed in roots and, to a lesser extent, in stems.

It is found in the membrane. The catalysed reaction is tirucalla-7,24-dien-3beta-ol + 2 reduced [NADPH--hemoprotein reductase] + 2 O2 = dihydroniloticin + 2 oxidized [NADPH--hemoprotein reductase] + 2 H2O + 2 H(+). Its pathway is secondary metabolite biosynthesis; terpenoid biosynthesis. Monooxygenase involved in the biosynthesis of quassinoids triterpene natural products such as ailanthone, chaparrinone, glaucarubinone and amarolide, allelopathic degraded triterpene lactones inhibiting the growth of other plants, and possessing antimalarial, antifeedant, insecticidal, anti-inflammatory and anticancer activities. Catalyzes the conversion of tirucalladienol to dihydroniloticin. This chain is Dihydroniloticin synthase CYP71CD4, found in Ailanthus altissima (Tree-of-heaven).